Here is a 297-residue protein sequence, read N- to C-terminus: 4-hydroxy-tetrahydrodipicolinate synthase (297 aa).

T49 provides a ligand contact to pyruvate. The Proton donor/acceptor role is filled by Y137. The active-site Schiff-base intermediate with substrate is K166. I208 lines the pyruvate pocket.

This sequence belongs to the DapA family. Homotetramer; dimer of dimers.

The protein localises to the cytoplasm. The enzyme catalyses L-aspartate 4-semialdehyde + pyruvate = (2S,4S)-4-hydroxy-2,3,4,5-tetrahydrodipicolinate + H2O + H(+). Its pathway is amino-acid biosynthesis; L-lysine biosynthesis via DAP pathway; (S)-tetrahydrodipicolinate from L-aspartate: step 3/4. Functionally, catalyzes the condensation of (S)-aspartate-beta-semialdehyde [(S)-ASA] and pyruvate to 4-hydroxy-tetrahydrodipicolinate (HTPA). The chain is 4-hydroxy-tetrahydrodipicolinate synthase from Phocaeicola vulgatus (strain ATCC 8482 / DSM 1447 / JCM 5826 / CCUG 4940 / NBRC 14291 / NCTC 11154) (Bacteroides vulgatus).